Reading from the N-terminus, the 293-residue chain is G1/S-specific cyclin-D3 (293 aa).

One can recognise a Cyclin N-terminal domain in the interval 27–152; the sequence is VLQSLLRLEE…LVLGKLKWDL (126 aa). The interval 257–293 is disordered; that stretch reads REAAQTAPSPVPKAPGGSSSQGPSQTSTPTDVTAIHL. Phosphoserine is present on residues Ser265 and Ser280. Low complexity predominate over residues 271-286; the sequence is PGGSSSQGPSQTSTPT. Thr284 is subject to Phosphothreonine.

It belongs to the cyclin family. Cyclin D subfamily. Interacts with the CDK4 and CDK6 protein kinases to form a serine/threonine kinase holoenzyme complex. The cyclin subunit imparts substrate specificity to the complex. Interacts with ATF5. Interacts with EIF3K. Component of the ternary complex cyclin D/CDK4/CDKN1B required for nuclear translocation and modulation of CDK4-mediated kinase activity. Can form similar complexes with either CDKN1A or CDKN2A. Phosphorylation at Thr-284 by MAP kinases is required for ubiquitination and degradation by the DCX(AMBRA1) complex. In terms of processing, ubiquitinated by the DCX(AMBRA1) complex during the transition from G1 to S cell phase, leading to its degradation: ubiquitination is dependent on Thr-284 phosphorylation. The DCX(AMBRA1) complex represents the major regulator of CCND3 stability during the G1/S transition. Polyubiquitinated by the SCF(FBXL2) complex, leading to proteasomal degradation.

The protein resides in the nucleus. The protein localises to the cytoplasm. Regulatory component of the cyclin D3-CDK4 (DC) complex that phosphorylates and inhibits members of the retinoblastoma (RB) protein family including RB1 and regulates the cell-cycle during G(1)/S transition. Phosphorylation of RB1 allows dissociation of the transcription factor E2F from the RB/E2F complex and the subsequent transcription of E2F target genes which are responsible for the progression through the G(1) phase. Hypophosphorylates RB1 in early G(1) phase. Cyclin D-CDK4 complexes are major integrators of various mitogenenic and antimitogenic signals. Component of the ternary complex, cyclin D3/CDK4/CDKN1B, required for nuclear translocation and activity of the cyclin D-CDK4 complex. Shows transcriptional coactivator activity with ATF5 independently of CDK4. The polypeptide is G1/S-specific cyclin-D3 (Rattus norvegicus (Rat)).